A 62-amino-acid polypeptide reads, in one-letter code: Large ribosomal subunit protein bL28 (62 aa).

This sequence belongs to the bacterial ribosomal protein bL28 family.

The polypeptide is Large ribosomal subunit protein bL28 (Streptococcus gordonii (strain Challis / ATCC 35105 / BCRC 15272 / CH1 / DL1 / V288)).